The primary structure comprises 446 residues: Glutamyl-tRNA(Gln) amidotransferase subunit D (446 aa).

The Asparaginase/glutaminase domain maps to Ser90–Asn421. Active-site residues include Thr100, Thr176, Asp177, and Lys255.

The protein belongs to the asparaginase 1 family. GatD subfamily. As to quaternary structure, heterodimer of GatD and GatE.

It catalyses the reaction L-glutamyl-tRNA(Gln) + L-glutamine + ATP + H2O = L-glutaminyl-tRNA(Gln) + L-glutamate + ADP + phosphate + H(+). Its function is as follows. Allows the formation of correctly charged Gln-tRNA(Gln) through the transamidation of misacylated Glu-tRNA(Gln) in organisms which lack glutaminyl-tRNA synthetase. The reaction takes place in the presence of glutamine and ATP through an activated gamma-phospho-Glu-tRNA(Gln). The GatDE system is specific for glutamate and does not act on aspartate. The protein is Glutamyl-tRNA(Gln) amidotransferase subunit D of Sulfolobus acidocaldarius (strain ATCC 33909 / DSM 639 / JCM 8929 / NBRC 15157 / NCIMB 11770).